The following is a 1238-amino-acid chain: Cullin-associated NEDD8-dissociated protein 1 (1238 aa).

HEAT repeat units lie at residues 41–78 (TYEN…RVKD), 126–167 (LVIK…KYGS), 171–208 (GDLE…PSPD), 210–247 (LFNS…SSGY), and 251–292 (KYLP…KCQK). A disordered region spans residues 315-354 (YSDDGEGEEDGDEEEEEMETSGDNDEEQEEEEEEEDLSDD). 9 HEAT repeats span residues 382 to 419 (ELYQ…QLNK), 432 to 469 (QQVP…IIPG), 603 to 641 (EIQS…SSIN), 646 to 683 (SILP…VCPN), 688 to 725 (SLLT…NYSE), 853 to 890 (HENE…CSLQ), 933 to 966 (PFLQ…KLSM), 967 to 1004 (IEPN…ENKE), and 1008 to 1045 (QYLA…NKPN).

It belongs to the CAND family.

The protein localises to the nucleus. Functionally, key assembly factor of SCF (SKP1-CUL1-F-box protein) E3 ubiquitin ligase complexes that promotes the exchange of the substrate-recognition F-box subunit in SCF complexes, thereby playing a key role in the cellular repertoire of SCF complexes. Acts as a F-box protein exchange factor. This chain is Cullin-associated NEDD8-dissociated protein 1 (cand1), found in Dictyostelium discoideum (Social amoeba).